The primary structure comprises 373 residues: Protein CAF40 (373 aa).

The tract at residues 1 to 91 (MFSAQKPIYG…ANATRNNPNM (91 aa)) is disordered. Positions 11 to 22 (NGAGVNMGGGGP) are enriched in gly residues. Over residues 50–88 (GGPMLMGNTPNNNNSNENGENNGNNGNNGGNDANATRNN) the composition is skewed to low complexity.

Belongs to the CNOT9 family. Subunit of the 1.0 MDa CCR4-NOT core complex that contains CCR4, CAF1, NOT1, NOT2, NOT3, NOT4, NOT5, CAF40 and CAF130. In the complex interacts with NOT1. The core complex probably is part of a less characterized 1.9 MDa CCR4-NOT complex.

The protein localises to the cytoplasm. It is found in the nucleus. Acts as a component of the CCR4-NOT core complex, which in the nucleus seems to be a general transcription factor, and in the cytoplasm the major mRNA deadenylase involved in mRNA turnover. The protein is Protein CAF40 (CAF40) of Saccharomyces cerevisiae (strain ATCC 204508 / S288c) (Baker's yeast).